The primary structure comprises 255 residues: Diphthine--ammonia ligase (255 aa).

The protein belongs to the Diphthine--ammonia ligase family.

The enzyme catalyses diphthine-[translation elongation factor 2] + NH4(+) + ATP = diphthamide-[translation elongation factor 2] + AMP + diphosphate + H(+). The protein operates within protein modification; peptidyl-diphthamide biosynthesis. Its function is as follows. Amidase that catalyzes the last step of diphthamide biosynthesis using ammonium and ATP. Diphthamide biosynthesis consists in the conversion of an L-histidine residue in the translation elongation factor eEF-2 (EEF2) to diphthamide. This Danio rerio (Zebrafish) protein is Diphthine--ammonia ligase (dph6).